The sequence spans 140 residues: Alkaline proteinase inhibitor (140 aa).

Positions 1-25 (MPSSVQATAGLLATLMMFCGEVAMA) are cleaved as a signal peptide.

Belongs to the protease inhibitor I38 family.

The protein resides in the periplasm. In terms of biological role, inhibitor of the alkaline protease. This is Alkaline proteinase inhibitor (inh) from Pseudomonas brassicacearum (strain NFM421).